Consider the following 638-residue polypeptide: Sodium- and chloride-dependent glycine transporter 1 (638 aa).

Positions 1 to 29 are disordered; that stretch reads MAAAQGPVAPSSLEQNGAVPSEATKKDQN. Topologically, residues 1–40 are cytoplasmic; that stretch reads MAAAQGPVAPSSLEQNGAVPSEATKKDQNLKRGNWGNQIE. 3 consecutive transmembrane segments (helical) span residues 41-61, 69-88, and 112-132; these read FVLTSVGYAVGLGNVWRFPYL, AFMFPYFIMLIFCGIPLFFM, and GVGYGMMVVSTYIGIYYNVVI. Residues 133-219 lie on the Extracellular side of the membrane; that stretch reads CIAFYYFFSS…DDIGNFGEVR (87 aa). Residues asparagine 169, asparagine 172, asparagine 182, and asparagine 188 are each glycosylated (N-linked (GlcNAc...) asparagine). 9 helical membrane passes run 220–238, 247–264, 300–317, 329–350, 383–402, 431–449, 465–485, 506–525, and 544–562; these read LPLLGCLGVSWVVVFLCLI, VVYFTATFPYVVLTILFI, IFYSLGCAWGGLVTMASY, VIISITNCATSVYAGFVIFSIL, LPISPLWSLLFFFMLILLGL, YVTLGVAVAGFLLGIPLTS, SFSLVIISCIMCVSIMYIYGH, ICWRFVSPAIIFFILIFSVI, and IGFLMALSSVICIPLYALF. The Cytoplasmic portion of the chain corresponds to 563 to 638; sequence QFCRTDGDTL…GSSRFQDSRI (76 aa). The segment at 597 to 638 is disordered; that stretch reads RYAPTTTPSPEDGLEVQPLHPDKAQIPMVGSNGSSRFQDSRI. At threonine 603 the chain carries Phosphothreonine. 2 positions are modified to phosphoserine: serine 605 and serine 630. An essential for interaction with EXOC1 region spans residues 627-638; sequence SNGSSRFQDSRI. Residues 627 to 638 are compositionally biased toward polar residues; the sequence is SNGSSRFQDSRI.

Belongs to the sodium:neurotransmitter symporter (SNF) (TC 2.A.22) family. SLC6A9 subfamily. As to quaternary structure, interacts with EXOC1; interaction increases the transporter capacity of SLC6A9 probably by promoting its insertion into the cell membrane. Interacts with EXOC3 and EXOC4.

It is found in the cell membrane. The catalysed reaction is glycine(out) + chloride(out) + 2 Na(+)(out) = glycine(in) + chloride(in) + 2 Na(+)(in). In terms of biological role, sodium- and chloride-dependent glycine transporter which is essential for regulating glycine concentrations at inhibitory glycinergic synapses. This Bos taurus (Bovine) protein is Sodium- and chloride-dependent glycine transporter 1 (SLC6A9).